A 572-amino-acid chain; its full sequence is NADH-ubiquinone oxidoreductase chain 5 (572 aa).

The next 16 membrane-spanning stretches (helical) occupy residues 4 to 24 (ISFV…LYFL), 44 to 64 (IVMT…VLMI), 86 to 106 (IMLV…PNLI), 107 to 127 (SILL…IYFQ), 147 to 167 (VALL…YIFY), 170 to 190 (IMQN…AAMT), 217 to 237 (SSTL…ILST), 239 to 259 (WLGQ…GLGA), 268 to 288 (IIAL…SMGF), 294 to 314 (FHLL…GAII), 337 to 357 (SACF…AGFY), 372 to 394 (NMFS…FRLV), 422 to 442 (MGLL…IFPF), 457 to 477 (LFVC…NLFF), 490 to 510 (FLGS…FYPL), and 552 to 572 (LKIY…LLFL).

It belongs to the complex I subunit 5 family.

The protein resides in the mitochondrion inner membrane. It carries out the reaction a ubiquinone + NADH + 5 H(+)(in) = a ubiquinol + NAD(+) + 4 H(+)(out). Its function is as follows. Core subunit of the mitochondrial membrane respiratory chain NADH dehydrogenase (Complex I) that is believed to belong to the minimal assembly required for catalysis. Complex I functions in the transfer of electrons from NADH to the respiratory chain. The immediate electron acceptor for the enzyme is believed to be ubiquinone. The sequence is that of NADH-ubiquinone oxidoreductase chain 5 (mt:ND5) from Drosophila melanogaster (Fruit fly).